We begin with the raw amino-acid sequence, 141 residues long: 3-hydroxyacyl-[acyl-carrier-protein] dehydratase FabZ (141 aa).

The active site involves His-48.

This sequence belongs to the thioester dehydratase family. FabZ subfamily.

It localises to the cytoplasm. It catalyses the reaction a (3R)-hydroxyacyl-[ACP] = a (2E)-enoyl-[ACP] + H2O. Involved in unsaturated fatty acids biosynthesis. Catalyzes the dehydration of short chain beta-hydroxyacyl-ACPs and long chain saturated and unsaturated beta-hydroxyacyl-ACPs. This is 3-hydroxyacyl-[acyl-carrier-protein] dehydratase FabZ from Herpetosiphon aurantiacus (strain ATCC 23779 / DSM 785 / 114-95).